The chain runs to 109 residues: Cell division protein ZapA (109 aa).

The stretch at 21–99 (PEQQEALNQA…IEQALLEQGK (79 aa)) forms a coiled coil.

Belongs to the ZapA family. Type 1 subfamily. In terms of assembly, homodimer. Interacts with FtsZ.

It is found in the cytoplasm. Functionally, activator of cell division through the inhibition of FtsZ GTPase activity, therefore promoting FtsZ assembly into bundles of protofilaments necessary for the formation of the division Z ring. It is recruited early at mid-cell but it is not essential for cell division. The protein is Cell division protein ZapA of Pectobacterium atrosepticum (strain SCRI 1043 / ATCC BAA-672) (Erwinia carotovora subsp. atroseptica).